Consider the following 407-residue polypeptide: Protein FAM53B (407 aa).

Disordered stretches follow at residues 204–286 (SSSM…RPSL) and 306–380 (ITGE…DTEP). Basic and acidic residues-rich tracts occupy residues 264–281 (LNEKKIGVKRRRPDDTHK) and 327–339 (DAVDSPAHEHNLK). Positions 272–275 (KRRR) match the Nuclear localization signal motif. Over residues 357–369 (ITEEVDWNCDDGT) the composition is skewed to acidic residues.

This sequence belongs to the FAM53 family. In terms of assembly, interacts with ctnnb1. Predominantly expressed in proliferating cells throughout embryonic development.

Its subcellular location is the nucleus. Functionally, acts as a regulator of Wnt signaling pathway by regulating beta-catenin (ctnnb1) nuclear localization. In Oryzias latipes (Japanese rice fish), this protein is Protein FAM53B.